The sequence spans 451 residues: Probable D-serine dehydratase (451 aa).

N6-(pyridoxal phosphate)lysine is present on Lys119.

Belongs to the serine/threonine dehydratase family. DsdA subfamily. The cofactor is pyridoxal 5'-phosphate.

It catalyses the reaction D-serine = pyruvate + NH4(+). This Acidovorax ebreus (strain TPSY) (Diaphorobacter sp. (strain TPSY)) protein is Probable D-serine dehydratase.